Consider the following 387-residue polypeptide: Small ribosomal subunit protein mS31 (387 aa).

A mitochondrion-targeting transit peptide spans Met1–Ser56. Disordered regions lie at residues Ser59–Lys83 and Lys203–Ser228. Polar residues-rich tracts occupy residues Val66–Ala76 and Met207–Ile217.

It belongs to the mitochondrion-specific ribosomal protein mS31 family. Component of the mitochondrial ribosome small subunit (28S) which comprises a 12S rRNA and about 30 distinct proteins.

It localises to the mitochondrion. The polypeptide is Small ribosomal subunit protein mS31 (Mrps31) (Rattus norvegicus (Rat)).